The chain runs to 156 residues: Transcription elongation factor GreA (156 aa).

The stretch at 1 to 32 (MKKVRLTREGYEKLKQELEELKRKFMYEISER) forms a coiled coil.

Belongs to the GreA/GreB family.

In terms of biological role, necessary for efficient RNA polymerase transcription elongation past template-encoded arresting sites. The arresting sites in DNA have the property of trapping a certain fraction of elongating RNA polymerases that pass through, resulting in locked ternary complexes. Cleavage of the nascent transcript by cleavage factors such as GreA or GreB allows the resumption of elongation from the new 3'terminus. GreA releases sequences of 2 to 3 nucleotides. The protein is Transcription elongation factor GreA of Thermotoga neapolitana (strain ATCC 49049 / DSM 4359 / NBRC 107923 / NS-E).